We begin with the raw amino-acid sequence, 347 residues long: MIPATYTLSQITARLGGEWRGEDTSVTAVRPLADAQAEHISFLANPKYKAEVHDSSAGAVIVSAKAADGFEGRNLIVADDPYLYFAKVARLFSPVVKARGGIHPTAVVEESATVPASCEIGANAYIGANTVLGEGCRILANAVVQHDCRLGDEVVLHPNAVVYYGCTLGRRVEIHSGAVIGADGFGLAFAGDSWFKIPQTGAVTLGDDVEIGSNTNIDRGAMSDTTVGNGTKIDNQVQIGHNCKIGSHTVIAAKTGISGSVTIGSYCIIGGGVGTVGHIEIADKTTIGGGTSVTHSITESGKHLAGIFPMSTHKEWARNAVYIHRLSEMNKRLKTLEQQLSDGKDTQ.

Catalysis depends on His-241, which acts as the Proton acceptor.

This sequence belongs to the transferase hexapeptide repeat family. LpxD subfamily. As to quaternary structure, homotrimer.

It catalyses the reaction a UDP-3-O-[(3R)-3-hydroxyacyl]-alpha-D-glucosamine + a (3R)-hydroxyacyl-[ACP] = a UDP-2-N,3-O-bis[(3R)-3-hydroxyacyl]-alpha-D-glucosamine + holo-[ACP] + H(+). It functions in the pathway bacterial outer membrane biogenesis; LPS lipid A biosynthesis. Catalyzes the N-acylation of UDP-3-O-acylglucosamine using 3-hydroxyacyl-ACP as the acyl donor. Is involved in the biosynthesis of lipid A, a phosphorylated glycolipid that anchors the lipopolysaccharide to the outer membrane of the cell. In Neisseria meningitidis serogroup A / serotype 4A (strain DSM 15465 / Z2491), this protein is UDP-3-O-acylglucosamine N-acyltransferase.